The following is a 715-amino-acid chain: Tegument protein UL46 (715 aa).

Disordered stretches follow at residues 432–513 (WSAG…CAAQ), 585–605 (DDARRKATHAASARERHAPYE), and 659–680 (GSALFSPPPRPPPPPPLSPSPV). The segment covering 444–455 (GPGGHRAGGGTV) has biased composition (gly residues). 2 stretches are compositionally biased toward low complexity: residues 456-467 (GKRFSGPARQRA) and 475-488 (PTLDPRGHPAVPEA). The span at 664–677 (SPPPRPPPPPPLSP) shows a compositional bias: pro residues.

It belongs to the herpesviridae HHV-1 VP11/12 protein family. Interacts with VP16. Interacts with host LCK, PIK3R1, SHC1 AND GRB2; these interactions promote the activation of the PI3K/AKT pathway. Interacts with host YWHAB. Interacts with ICP0; this interaction targets UL46 for degradation by the proteasome. Post-translationally, phosphorylated by host LCK. The phosphorylation seems to be lymphocyte-specific.

It is found in the virion tegument. The protein localises to the host cell membrane. In terms of biological role, plays a role in the activation of the host PI3K/AKT pathway to promote cell survival. Interacts with and activates host LCK and thereby recruits downstream partners SHC1, GRB2 and PI3KR1 in order to activate the PI3K pathway by phosphorylating host AKT on its activating residues. This mechanism is inhibited by the viral protein US3 that instead promotes incorporation of UL46 into virions. The polypeptide is Tegument protein UL46 (Human herpesvirus 1 (strain F) (HHV-1)).